The chain runs to 740 residues: Catalase-peroxidase (740 aa).

Residues 102-229 constitute a cross-link (tryptophyl-tyrosyl-methioninium (Trp-Tyr) (with M-256)); sequence WHAAGTYRTG…LAAIQMGLIY (128 aa). His-103 (proton acceptor) is an active-site residue. Residues 111-130 form a disordered region; it reads GDGRGGSSSGQQRFAPLNSW. Positions 229 to 256 form a cross-link, tryptophyl-tyrosyl-methioninium (Tyr-Met) (with W-102); the sequence is YVNPEGPGGDPHDPEGMARDMRETFARM. Position 271 (His-271) interacts with heme b.

Belongs to the peroxidase family. Peroxidase/catalase subfamily. As to quaternary structure, homodimer or homotetramer. Requires heme b as cofactor. In terms of processing, formation of the three residue Trp-Tyr-Met cross-link is important for the catalase, but not the peroxidase activity of the enzyme.

It carries out the reaction H2O2 + AH2 = A + 2 H2O. It catalyses the reaction 2 H2O2 = O2 + 2 H2O. Bifunctional enzyme with both catalase and broad-spectrum peroxidase activity. In Erythrobacter litoralis (strain HTCC2594), this protein is Catalase-peroxidase.